The primary structure comprises 170 residues: 3-hydroxydecanoyl-[acyl-carrier-protein] dehydratase (170 aa).

The active site involves His69.

Belongs to the thioester dehydratase family. FabA subfamily. In terms of assembly, homodimer.

Its subcellular location is the cytoplasm. The catalysed reaction is a (3R)-hydroxyacyl-[ACP] = a (2E)-enoyl-[ACP] + H2O. It carries out the reaction (3R)-hydroxydecanoyl-[ACP] = (2E)-decenoyl-[ACP] + H2O. The enzyme catalyses (2E)-decenoyl-[ACP] = (3Z)-decenoyl-[ACP]. The protein operates within lipid metabolism; fatty acid biosynthesis. Functionally, necessary for the introduction of cis unsaturation into fatty acids. Catalyzes the dehydration of (3R)-3-hydroxydecanoyl-ACP to E-(2)-decenoyl-ACP and then its isomerization to Z-(3)-decenoyl-ACP. Can catalyze the dehydratase reaction for beta-hydroxyacyl-ACPs with saturated chain lengths up to 16:0, being most active on intermediate chain length. The chain is 3-hydroxydecanoyl-[acyl-carrier-protein] dehydratase from Idiomarina loihiensis (strain ATCC BAA-735 / DSM 15497 / L2-TR).